The chain runs to 174 residues: Zinc finger AN1 domain-containing stress-associated protein 15 (174 aa).

A disordered region spans residues 1–61 (MAQESCDLNK…TPPAAAAAAS (61 aa)). The segment covering 18–41 (PSSSSSPSPSPTTASPSPPTAQMT) has biased composition (low complexity). The segment covering 42 to 54 (EPPPPQSTPPTPP) has biased composition (pro residues). The segment at 109-155 (VLFVNRCNVCRKRVGLTGFRCRCGELFCPRHRHSETHECSFDYKTAG) adopts an AN1-type zinc-finger fold. Zn(2+) is bound by residues Cys-115, Cys-118, Cys-129, Cys-131, Cys-136, His-139, His-145, and Cys-147.

May be involved in environmental stress response. This chain is Zinc finger AN1 domain-containing stress-associated protein 15 (SAP15), found in Oryza sativa subsp. japonica (Rice).